The following is a 408-amino-acid chain: MANINENYLKLKAGYLFPEISKRVKIYSEKNPSAKIIRLGIGDVTLPIVPSVVDAMVEASKEMGTVGGFHGYGPEQGYSFLLKSIADHDYGSLGIKIDESEIFVSDGSKCDCGNIQEIFSTDSKIAVADPVYPVYVDTNVMAGRTGEIGPDGRYSNLIYMPATKENGFQPEIPKEKADIVYLCYPNNPTGTVTTKESLKAWVEYAKKNNSIILYDSAYEAFISEPGVPRSIYEVEGAKEVAIEFRSFSKTAGFTGLRCAYIVIPKELKGRTRSGEEVSLNSLWNRRHTTKFNGVSYVTQKGAEACYSPQGKKEIQTSIAYYMANASKIRDGLKKAGYEVFGGVNAPYIWLKTSDNLSSWDFFDKLLNKAQVVGTPGSGFGPAGEGYFRLSAFGKKEDVEEAIARITSL.

Positions 15 and 42 each coordinate substrate. Residues Tyr-72, 108–109 (SK), Tyr-132, Asn-187, Tyr-218, and 246–248 (SFS) each bind pyridoxal 5'-phosphate. Substrate is bound by residues Lys-109, Tyr-132, and Asn-187. N6-(pyridoxal phosphate)lysine is present on Lys-249. Pyridoxal 5'-phosphate contacts are provided by Arg-257 and Asn-292. Substrate-binding residues include Asn-292 and Arg-388.

The protein belongs to the class-I pyridoxal-phosphate-dependent aminotransferase family. LL-diaminopimelate aminotransferase subfamily. Homodimer. Requires pyridoxal 5'-phosphate as cofactor.

The enzyme catalyses (2S,6S)-2,6-diaminopimelate + 2-oxoglutarate = (S)-2,3,4,5-tetrahydrodipicolinate + L-glutamate + H2O + H(+). It functions in the pathway amino-acid biosynthesis; L-lysine biosynthesis via DAP pathway; LL-2,6-diaminopimelate from (S)-tetrahydrodipicolinate (aminotransferase route): step 1/1. In terms of biological role, involved in the synthesis of meso-diaminopimelate (m-DAP or DL-DAP), required for both lysine and peptidoglycan biosynthesis. Catalyzes the direct conversion of tetrahydrodipicolinate to LL-diaminopimelate. Is also able to catalyze the reverse reaction in vitro, i.e. the transamination of LL-diaminopimelate with 2-oxoglutarate to produce tetrahydrodipicolinate and glutamate. Cannot use m-DAP, lysine or ornithine as the amino-group donor, when using 2-oxoglutarate as the amino-group acceptor. Cannot use pyruvate, indole 3-pyruvate, oxaloacetate or phenyl pyruvate as the amino-group acceptor, when using LL-DAP as the amino-group donor. This chain is LL-diaminopimelate aminotransferase, found in Leptospira interrogans serogroup Icterohaemorrhagiae serovar copenhageni (strain Fiocruz L1-130).